A 258-amino-acid chain; its full sequence is Beta carbonic anhydrase 3 (258 aa).

The first 28 residues, 1-28 (MSTESYEDAIKRLGELLSKKSDLGNVAA), serve as a signal peptide directing secretion. Positions 24-54 (GNVAAAKIKKLTDELEELDSNKLDAVERIKS) form a coiled coil. T35 carries the post-translational modification Phosphothreonine. Residue S95 is modified to Phosphoserine. Position 201 is an S-nitrosocysteine (C201).

Belongs to the beta-class carbonic anhydrase family. As to expression, strongly expressed in aerial tissues including leaves, stems, flowers and siliques, and, to a lower extent, in roots.

It is found in the cytoplasm. The protein localises to the cytosol. The catalysed reaction is hydrogencarbonate + H(+) = CO2 + H2O. Reversible hydration of carbon dioxide. This Arabidopsis thaliana (Mouse-ear cress) protein is Beta carbonic anhydrase 3 (BCA3).